The primary structure comprises 474 residues: tRNA-2-methylthio-N(6)-dimethylallyladenosine synthase (474 aa).

The MTTase N-terminal domain occupies 3–120 (KKLLIKTWGC…LPEMIKQSQS (118 aa)). [4Fe-4S] cluster contacts are provided by cysteine 12, cysteine 49, cysteine 83, cysteine 157, cysteine 161, and cysteine 164. Residues 143–375 (RAEGATAFVS…QQQINAQAMR (233 aa)) form the Radical SAM core domain. The TRAM domain maps to 378–441 (RLMLGTEQRV…ANSLRGEIVR (64 aa)).

The protein belongs to the methylthiotransferase family. MiaB subfamily. Monomer. [4Fe-4S] cluster is required as a cofactor.

It is found in the cytoplasm. It catalyses the reaction N(6)-dimethylallyladenosine(37) in tRNA + (sulfur carrier)-SH + AH2 + 2 S-adenosyl-L-methionine = 2-methylsulfanyl-N(6)-dimethylallyladenosine(37) in tRNA + (sulfur carrier)-H + 5'-deoxyadenosine + L-methionine + A + S-adenosyl-L-homocysteine + 2 H(+). In terms of biological role, catalyzes the methylthiolation of N6-(dimethylallyl)adenosine (i(6)A), leading to the formation of 2-methylthio-N6-(dimethylallyl)adenosine (ms(2)i(6)A) at position 37 in tRNAs that read codons beginning with uridine. This Vibrio vulnificus (strain CMCP6) protein is tRNA-2-methylthio-N(6)-dimethylallyladenosine synthase.